The chain runs to 407 residues: tRNA (guanine(9)-N1)-methyltransferase (407 aa).

Residues 1 to 19 show a composition bias toward basic and acidic residues; that stretch reads MDLDPAHKPSQAEETKEQG. Disordered regions lie at residues 1 to 105 and 220 to 256; these read MDLD…VRKR and ENMI…PRPE. A compositionally biased stretch (low complexity) spans 20-32; the sequence is NEQGQVEQNQAQQ. Basic residues predominate over residues 91-103; it reads LKRKDSRIARKVR. Residues 120–356 form the SAM-dependent MTase TRM10-type domain; sequence ANKQKPPSVN…SVIPKRKGGK (237 aa). S-adenosyl-L-methionine is bound by residues 263 to 264, glycine 283, 287 to 291, cysteine 295, leucine 309, and 321 to 323; these read LS, DKNRE, and TVL. Catalysis depends on aspartate 287, which acts as the Proton acceptor. The interval 353–407 is disordered; it reads KGGKLKEQQGASGETQETEEAEAEDPEEENEETKDPDAEASASKQNTPKVEVTSK. Positions 368-386 are enriched in acidic residues; it reads QETEEAEAEDPEEENEETK. Residues 394 to 407 show a composition bias toward polar residues; that stretch reads ASKQNTPKVEVTSK.

This sequence belongs to the class IV-like SAM-binding methyltransferase superfamily. TRM10 family. Monomer.

Its subcellular location is the cytoplasm. It localises to the nucleus. The catalysed reaction is guanosine(9) in tRNA + S-adenosyl-L-methionine = N(1)-methylguanosine(9) in tRNA + S-adenosyl-L-homocysteine + H(+). S-adenosyl-L-methionine-dependent guanine N(1)-methyltransferase that catalyzes the formation of N(1)-methylguanine at position 9 (m1G9) in cytoplasmic tRNA. This Gibberella zeae (strain ATCC MYA-4620 / CBS 123657 / FGSC 9075 / NRRL 31084 / PH-1) (Wheat head blight fungus) protein is tRNA (guanine(9)-N1)-methyltransferase.